The chain runs to 283 residues: Putative aquaporin NIP4-1 (283 aa).

M1 carries the N-acetylmethionine modification. Transmembrane regions (helical) follow at residues 45–65 and 70–90; these read LIAE…VVVV and GGTI…MVMI. Residues 102-104 carry the NPA 1 motif; sequence NPA. A run of 3 helical transmembrane segments spans residues 122 to 142, 161 to 181, and 189 to 209; these read LYIG…RLMF, ALVA…GVAT, and LAGI…GPIS. An NPA 2 motif is present at residues 214–216; that stretch reads NPA. The helical transmembrane segment at 231-251 threads the bilayer; it reads IWVYIVGPVLGVISGGFVYNL. At S267 the chain carries Phosphoserine.

This sequence belongs to the MIP/aquaporin (TC 1.A.8) family. NIP (TC 1.A.8.12) subfamily.

It is found in the membrane. In terms of biological role, potential aquaporin, which may facilitate the transport of water and small neutral solutes across cell membranes. The sequence is that of Putative aquaporin NIP4-1 (NIP4-1) from Arabidopsis thaliana (Mouse-ear cress).